Reading from the N-terminus, the 213-residue chain is ATP phosphoribosyltransferase (213 aa).

Belongs to the ATP phosphoribosyltransferase family. Short subfamily. As to quaternary structure, heteromultimer composed of HisG and HisZ subunits.

The protein resides in the cytoplasm. The enzyme catalyses 1-(5-phospho-beta-D-ribosyl)-ATP + diphosphate = 5-phospho-alpha-D-ribose 1-diphosphate + ATP. It participates in amino-acid biosynthesis; L-histidine biosynthesis; L-histidine from 5-phospho-alpha-D-ribose 1-diphosphate: step 1/9. Its function is as follows. Catalyzes the condensation of ATP and 5-phosphoribose 1-diphosphate to form N'-(5'-phosphoribosyl)-ATP (PR-ATP). Has a crucial role in the pathway because the rate of histidine biosynthesis seems to be controlled primarily by regulation of HisG enzymatic activity. In Bacillus licheniformis (strain ATCC 14580 / DSM 13 / JCM 2505 / CCUG 7422 / NBRC 12200 / NCIMB 9375 / NCTC 10341 / NRRL NRS-1264 / Gibson 46), this protein is ATP phosphoribosyltransferase.